The chain runs to 94 residues: Defensin alpha 5 (94 aa).

Positions 1 to 19 (MRTIAILAAILLVALQAQA) are cleaved as a signal peptide. Disulfide bonds link cysteine 65-cysteine 93, cysteine 67-cysteine 82, and cysteine 72-cysteine 92.

This sequence belongs to the alpha-defensin family. In terms of assembly, homodimer. Homotetramer. Interacts with B.antracis lef/lethal factor. Post-translationally, glycosylated. Proteolytically cleaved at Arg-62 by trypsin. Both the propeptide form proHD5/HD5(20-94) and HD5(56-94) are cleaved into the lumenal peptide form HD5(63-94) by trypsin. Unprocessed proHD5 exerts antimicrobial activities, but peptide potency is enhanced by peptide processing. Proteolytically cleaved in duodenal fluid; derived fragments are antimicrobially active against commensal bacteria (in vitro). In terms of processing, (Microbial infection) The disulfide bridges and homodimerization are a prerequisite for the enhancement of S.flexneri adhesion and invasion. Expressed in the gastrointestinal, reproductive, and urinary tracts (at protein level). Expressed in Paneth cells of the small intestine (at protein level). Expressed throughout the urothelium of the lower urinary tract and in the collecting tubules of the kidney (at protein level). Expressed in stratified squamous epithelial cells of the female genital tract epithelia, such as in vagina, ectocervix, endocervix, endometrium, and fallopian tube (at protein level). Endometrial expression correlates with stages of the menstrual cycle: Expression is low during the early proliferative phase, increased during the mid- to late proliferative phase, peaks during the early secretory phase of the cycle, and decreases during the mid- to late secretory phase.

The protein resides in the secreted. Its subcellular location is the cytoplasmic vesicle. The protein localises to the secretory vesicle. Host-defense peptide that maintains sterility in the urogenital system. Has antimicrobial activity against a wide range of bacteria, including Gram-negative E.coli, P.aeruginosa and S.typhimurium, and Gram-positive E.aerogenes, S.aureus, B.cereus, E.faecium and L.monocytogenes. Confers resistance to intestinal infection by S.typhimurium. Exhibits antimicrobial activity against enteric commensal bacteria such as B.adolescentis, L.acidophilus, B.breve, L.fermentum, B.longum and S.thermophilus. Binds to bacterial membranes and causes membrane disintegration. Induces the secretion of the chemokine IL-8 by intestinal epithelial cells. Binds to B.antracis lef/lethal factor, a major virulence factor from B.anthracis, and neutralizes its enzymatic activity. Functionally, (Microbial infection) Acts as a target for S.flexneri infection by binding to the bacterium, possibly via bacterial surface proteins, and thereby augmenting infectivity via enhanced bacterial adhesion and invasion of epithelial cells and tissues. The chain is Defensin alpha 5 (DEFA5) from Homo sapiens (Human).